The following is a 115-amino-acid chain: Nucleoid-associated protein tlr0723 (115 aa).

Belongs to the YbaB/EbfC family. As to quaternary structure, homodimer.

It is found in the cytoplasm. The protein localises to the nucleoid. Binds to DNA and alters its conformation. May be involved in regulation of gene expression, nucleoid organization and DNA protection. The protein is Nucleoid-associated protein tlr0723 of Thermosynechococcus vestitus (strain NIES-2133 / IAM M-273 / BP-1).